The primary structure comprises 340 residues: Lipoyl synthase (340 aa).

The [4Fe-4S] cluster site is built by cysteine 83, cysteine 88, cysteine 94, cysteine 109, cysteine 113, cysteine 116, and serine 323. Residues 95 to 312 (FSGGTATFMI…AEEGYKMGFK (218 aa)) form the Radical SAM core domain.

Belongs to the radical SAM superfamily. Lipoyl synthase family. It depends on [4Fe-4S] cluster as a cofactor.

It localises to the cytoplasm. It catalyses the reaction [[Fe-S] cluster scaffold protein carrying a second [4Fe-4S](2+) cluster] + N(6)-octanoyl-L-lysyl-[protein] + 2 oxidized [2Fe-2S]-[ferredoxin] + 2 S-adenosyl-L-methionine + 4 H(+) = [[Fe-S] cluster scaffold protein] + N(6)-[(R)-dihydrolipoyl]-L-lysyl-[protein] + 4 Fe(3+) + 2 hydrogen sulfide + 2 5'-deoxyadenosine + 2 L-methionine + 2 reduced [2Fe-2S]-[ferredoxin]. Its pathway is protein modification; protein lipoylation via endogenous pathway; protein N(6)-(lipoyl)lysine from octanoyl-[acyl-carrier-protein]: step 2/2. Functionally, catalyzes the radical-mediated insertion of two sulfur atoms into the C-6 and C-8 positions of the octanoyl moiety bound to the lipoyl domains of lipoate-dependent enzymes, thereby converting the octanoylated domains into lipoylated derivatives. In Pseudomonas fluorescens (strain Pf0-1), this protein is Lipoyl synthase.